The chain runs to 602 residues: Glutamate-rich protein 6 (602 aa).

The disordered stretch occupies residues 22–67 (LRPRLTSVSSPSLSSTPPPSPLSSPSWSEEELPAPRSDGSPASSIS). Positions 25–36 (RLTSVSSPSLSS) are enriched in low complexity.

The protein belongs to the ERICH6 family.

It is found in the nucleus. In Rattus norvegicus (Rat), this protein is Glutamate-rich protein 6 (Erich6).